The following is a 378-amino-acid chain: Erythronate-4-phosphate dehydrogenase (378 aa).

Ser45 and Thr66 together coordinate substrate. Asp146 and Thr175 together coordinate NAD(+). The active site involves Arg208. Asp232 provides a ligand contact to NAD(+). Glu237 is an active-site residue. Catalysis depends on His254, which acts as the Proton donor. Gly257 lines the NAD(+) pocket. Substrate is bound at residue Tyr258.

The protein belongs to the D-isomer specific 2-hydroxyacid dehydrogenase family. PdxB subfamily. Homodimer.

It is found in the cytoplasm. It catalyses the reaction 4-phospho-D-erythronate + NAD(+) = (R)-3-hydroxy-2-oxo-4-phosphooxybutanoate + NADH + H(+). The protein operates within cofactor biosynthesis; pyridoxine 5'-phosphate biosynthesis; pyridoxine 5'-phosphate from D-erythrose 4-phosphate: step 2/5. In terms of biological role, catalyzes the oxidation of erythronate-4-phosphate to 3-hydroxy-2-oxo-4-phosphonooxybutanoate. The polypeptide is Erythronate-4-phosphate dehydrogenase (Escherichia coli O139:H28 (strain E24377A / ETEC)).